Reading from the N-terminus, the 76-residue chain is ATP synthase subunit c (76 aa).

2 helical membrane-spanning segments follow: residues 13–33 (LSVI…GILF) and 55–75 (FIGL…ALII).

It belongs to the ATPase C chain family. F-type ATPases have 2 components, F(1) - the catalytic core - and F(0) - the membrane proton channel. F(1) has five subunits: alpha(3), beta(3), gamma(1), delta(1), epsilon(1). F(0) has three main subunits: a(1), b(2) and c(10-14). The alpha and beta chains form an alternating ring which encloses part of the gamma chain. F(1) is attached to F(0) by a central stalk formed by the gamma and epsilon chains, while a peripheral stalk is formed by the delta and b chains.

It is found in the cell membrane. In terms of biological role, f(1)F(0) ATP synthase produces ATP from ADP in the presence of a proton or sodium gradient. F-type ATPases consist of two structural domains, F(1) containing the extramembraneous catalytic core and F(0) containing the membrane proton channel, linked together by a central stalk and a peripheral stalk. During catalysis, ATP synthesis in the catalytic domain of F(1) is coupled via a rotary mechanism of the central stalk subunits to proton translocation. Key component of the F(0) channel; it plays a direct role in translocation across the membrane. A homomeric c-ring of between 10-14 subunits forms the central stalk rotor element with the F(1) delta and epsilon subunits. This chain is ATP synthase subunit c, found in Bifidobacterium longum subsp. infantis (strain ATCC 15697 / DSM 20088 / JCM 1222 / NCTC 11817 / S12).